A 137-amino-acid polypeptide reads, in one-letter code: Large ribosomal subunit protein uL16 (137 aa).

The protein belongs to the universal ribosomal protein uL16 family. As to quaternary structure, part of the 50S ribosomal subunit.

Binds 23S rRNA and is also seen to make contacts with the A and possibly P site tRNAs. The protein is Large ribosomal subunit protein uL16 of Spiroplasma citri.